The primary structure comprises 316 residues: 4-hydroxy-3-methylbut-2-enyl diphosphate reductase (316 aa).

Cys12 provides a ligand contact to [4Fe-4S] cluster. Residues His41 and His74 each coordinate (2E)-4-hydroxy-3-methylbut-2-enyl diphosphate. His41 and His74 together coordinate dimethylallyl diphosphate. Isopentenyl diphosphate-binding residues include His41 and His74. Residue Cys96 coordinates [4Fe-4S] cluster. His124 is a binding site for (2E)-4-hydroxy-3-methylbut-2-enyl diphosphate. His124 lines the dimethylallyl diphosphate pocket. His124 is an isopentenyl diphosphate binding site. Glu126 functions as the Proton donor in the catalytic mechanism. Thr167 is a (2E)-4-hydroxy-3-methylbut-2-enyl diphosphate binding site. Cys197 serves as a coordination point for [4Fe-4S] cluster. Residues Ser225, Ser226, Asn227, and Ser269 each coordinate (2E)-4-hydroxy-3-methylbut-2-enyl diphosphate. Dimethylallyl diphosphate-binding residues include Ser225, Ser226, Asn227, and Ser269. The isopentenyl diphosphate site is built by Ser225, Ser226, Asn227, and Ser269.

The protein belongs to the IspH family. Homodimer. It depends on [4Fe-4S] cluster as a cofactor.

It carries out the reaction isopentenyl diphosphate + 2 oxidized [2Fe-2S]-[ferredoxin] + H2O = (2E)-4-hydroxy-3-methylbut-2-enyl diphosphate + 2 reduced [2Fe-2S]-[ferredoxin] + 2 H(+). It catalyses the reaction dimethylallyl diphosphate + 2 oxidized [2Fe-2S]-[ferredoxin] + H2O = (2E)-4-hydroxy-3-methylbut-2-enyl diphosphate + 2 reduced [2Fe-2S]-[ferredoxin] + 2 H(+). Its pathway is isoprenoid biosynthesis; dimethylallyl diphosphate biosynthesis; dimethylallyl diphosphate from (2E)-4-hydroxy-3-methylbutenyl diphosphate: step 1/1. It functions in the pathway isoprenoid biosynthesis; isopentenyl diphosphate biosynthesis via DXP pathway; isopentenyl diphosphate from 1-deoxy-D-xylulose 5-phosphate: step 6/6. Catalyzes the conversion of 1-hydroxy-2-methyl-2-(E)-butenyl 4-diphosphate (HMBPP) into a mixture of isopentenyl diphosphate (IPP) and dimethylallyl diphosphate (DMAPP). Acts in the terminal step of the DOXP/MEP pathway for isoprenoid precursor biosynthesis. The sequence is that of 4-hydroxy-3-methylbut-2-enyl diphosphate reductase from Salmonella paratyphi A (strain ATCC 9150 / SARB42).